The sequence spans 818 residues: Serine/threonine-protein phosphatase 4 regulatory subunit 3 (818 aa).

Residues Met1–Val100 form the WH1 domain. The tract at residues Leu718–Ser818 is disordered. Polar residues predominate over residues Ser721–Ser730. Residues Ser736–Ser756 are compositionally biased toward low complexity. Over residues Tyr788 to Lys804 the composition is skewed to acidic residues.

This sequence belongs to the SMEK family. In terms of assembly, serine/threonine-protein phosphatase 4 (PP4) occurs in different assemblies of the catalytic and one or more regulatory subunits.

Functionally, regulatory subunit of serine/threonine-protein phosphatase 4. The polypeptide is Serine/threonine-protein phosphatase 4 regulatory subunit 3 (smek1) (Tetraodon nigroviridis (Spotted green pufferfish)).